The primary structure comprises 274 residues: D-aminoacyl-tRNA deacylase (274 aa).

Belongs to the DtdA deacylase family. In terms of assembly, monomer. It depends on Zn(2+) as a cofactor.

It carries out the reaction a D-aminoacyl-tRNA + H2O = a tRNA + a D-alpha-amino acid + H(+). The enzyme catalyses glycyl-tRNA(Ala) + H2O = tRNA(Ala) + glycine + H(+). Its function is as follows. D-aminoacyl-tRNA deacylase with broad substrate specificity. By recycling D-aminoacyl-tRNA to D-amino acids and free tRNA molecules, this enzyme counteracts the toxicity associated with the formation of D-aminoacyl-tRNA entities in vivo. The protein is D-aminoacyl-tRNA deacylase of Pyrococcus horikoshii (strain ATCC 700860 / DSM 12428 / JCM 9974 / NBRC 100139 / OT-3).